The primary structure comprises 331 residues: Ferredoxin--NADP reductase 2 (331 aa).

The FAD site is built by glutamate 37, glutamine 45, tyrosine 50, valine 90, phenylalanine 124, aspartate 286, and threonine 327.

Belongs to the ferredoxin--NADP reductase type 2 family. As to quaternary structure, homodimer. Requires FAD as cofactor.

The catalysed reaction is 2 reduced [2Fe-2S]-[ferredoxin] + NADP(+) + H(+) = 2 oxidized [2Fe-2S]-[ferredoxin] + NADPH. The sequence is that of Ferredoxin--NADP reductase 2 from Listeria welshimeri serovar 6b (strain ATCC 35897 / DSM 20650 / CCUG 15529 / CIP 8149 / NCTC 11857 / SLCC 5334 / V8).